A 977-amino-acid chain; its full sequence is Alanine--tRNA ligase (977 aa).

The tract at residues 512 to 535 is disordered; it reads SQVDSKLQSSTPAGTGSYDSKQVS. Zn(2+)-binding residues include His-618, His-622, Cys-720, and His-724.

The protein belongs to the class-II aminoacyl-tRNA synthetase family. Requires Zn(2+) as cofactor.

The protein resides in the cytoplasm. It carries out the reaction tRNA(Ala) + L-alanine + ATP = L-alanyl-tRNA(Ala) + AMP + diphosphate. In terms of biological role, catalyzes the attachment of alanine to tRNA(Ala) in a two-step reaction: alanine is first activated by ATP to form Ala-AMP and then transferred to the acceptor end of tRNA(Ala). Also edits incorrectly charged Ser-tRNA(Ala) and Gly-tRNA(Ala) via its editing domain. This Leptospira interrogans serogroup Icterohaemorrhagiae serovar copenhageni (strain Fiocruz L1-130) protein is Alanine--tRNA ligase.